A 231-amino-acid chain; its full sequence is Isoprenyl transferase (231 aa).

D14 is a catalytic residue. D14 is a binding site for Mg(2+). Substrate-binding positions include 15-18 (GNGR), W19, R27, H31, and 59-61 (STE). Residue N62 is the Proton acceptor of the active site. Substrate contacts are provided by residues W63, R65, R176, and 182 to 184 (RIS). Residue E195 participates in Mg(2+) binding.

It belongs to the UPP synthase family. Homodimer. The cofactor is Mg(2+).

Its function is as follows. Catalyzes the condensation of isopentenyl diphosphate (IPP) with allylic pyrophosphates generating different type of terpenoids. This is Isoprenyl transferase from Aquifex aeolicus (strain VF5).